Reading from the N-terminus, the 244-residue chain is NAD-dependent protein deacetylase (244 aa).

A Deacetylase sirtuin-type domain is found at 1–244; that stretch reads MSATERQLQY…IGDTCRQLRA (244 aa). 8 residues coordinate NAD(+): alanine 27, threonine 31, phenylalanine 38, arginine 39, glutamine 107, isoleucine 109, aspartate 110, and histidine 125. A nicotinamide-binding site is contributed by phenylalanine 38. 2 residues coordinate nicotinamide: isoleucine 109 and aspartate 110. The active-site Proton acceptor is the histidine 125. Zn(2+) is bound by residues cysteine 133, cysteine 136, cysteine 153, and cysteine 156. Residues serine 192, serine 193, asparagine 217, and isoleucine 235 each coordinate NAD(+).

This sequence belongs to the sirtuin family. Class U subfamily. Requires Zn(2+) as cofactor.

The protein resides in the cytoplasm. It catalyses the reaction N(6)-acetyl-L-lysyl-[protein] + NAD(+) + H2O = 2''-O-acetyl-ADP-D-ribose + nicotinamide + L-lysyl-[protein]. NAD-dependent protein deacetylase which modulates the activities of several enzymes which are inactive in their acetylated form. The sequence is that of NAD-dependent protein deacetylase from Chromobacterium violaceum (strain ATCC 12472 / DSM 30191 / JCM 1249 / CCUG 213 / NBRC 12614 / NCIMB 9131 / NCTC 9757 / MK).